The primary structure comprises 320 residues: Putative GDP-polyphosphate phosphotransferase PKK2A (320 aa).

Disordered stretches follow at residues 1-21, 246-267, and 281-320; these read MRKK…PKLD, RPLP…PPRD, and EERI…KSKK. Residues 12–21 show a composition bias toward basic and acidic residues; it reads DFRKNPPKLD. Positions 281–290 are enriched in basic and acidic residues; sequence EERIKKEEKA.

Belongs to the polyphosphate kinase 2 (PPK2) family. Class I subfamily.

It carries out the reaction [phosphate](n) + GTP = [phosphate](n+1) + GDP. The polypeptide is Putative GDP-polyphosphate phosphotransferase PKK2A (Corynebacterium glutamicum (strain ATCC 13032 / DSM 20300 / JCM 1318 / BCRC 11384 / CCUG 27702 / LMG 3730 / NBRC 12168 / NCIMB 10025 / NRRL B-2784 / 534)).